The sequence spans 66 residues: Large ribosomal subunit protein bL33c (66 aa).

It belongs to the bacterial ribosomal protein bL33 family.

The protein resides in the plastid. It localises to the chloroplast. The sequence is that of Large ribosomal subunit protein bL33c from Gossypium barbadense (Sea Island cotton).